The following is an 82-amino-acid chain: RNA-binding protein Hfq (82 aa).

The region spanning 11–71 (DTFLNHVRKT…ISTIMPGAPI (61 aa)) is the Sm domain.

It belongs to the Hfq family. In terms of assembly, homohexamer.

Functionally, RNA chaperone that binds small regulatory RNA (sRNAs) and mRNAs to facilitate mRNA translational regulation in response to envelope stress, environmental stress and changes in metabolite concentrations. Also binds with high specificity to tRNAs. This is RNA-binding protein Hfq from Bradyrhizobium sp. (strain BTAi1 / ATCC BAA-1182).